Consider the following 278-residue polypeptide: Chitosanase (278 aa).

Positions Met1–Leu41 are cleaved as a signal peptide. Residue Glu63 is the Proton donor of the active site. Asp81 (nucleophile) is an active-site residue.

It belongs to the glycosyl hydrolase 46 family.

The protein localises to the secreted. It carries out the reaction Endohydrolysis of beta-(1-&gt;4)-linkages between D-glucosamine residues in a partly acetylated chitosan.. In terms of biological role, aids in the defense against invading fungal pathogens by degrading their cell wall chitosan. The polypeptide is Chitosanase (csn) (Nocardioides sp. (strain N106)).